The primary structure comprises 182 residues: Early nodulin-like protein 10 (182 aa).

The signal sequence occupies residues 1 to 20; the sequence is MSSVMMCCCLLLLFGLLSEG. A Phytocyanin domain is found at 21 to 125; sequence REILVGGKSN…GEKLRVVVLS (105 aa). A glycan (N-linked (GlcNAc...) asparagine) is linked at asparagine 65. A disulfide bridge links cysteine 79 with cysteine 113. N-linked (GlcNAc...) asparagine glycans are attached at residues asparagine 129 and asparagine 148. Residue asparagine 157 is the site of GPI-anchor amidated asparagine attachment. Positions 158 to 182 are cleaved as a propeptide — removed in mature form; it reads AHIMNKGSLNTAWSLLLLLPLGLLV.

This sequence belongs to the early nodulin-like (ENODL) family. As to expression, mostly expressed in flowers, and, to a lower extent, in leaves, but barely in seedlings, stems, seeds and roots.

The protein resides in the cell membrane. May act as a carbohydrate transporter. The protein is Early nodulin-like protein 10 of Arabidopsis thaliana (Mouse-ear cress).